Reading from the N-terminus, the 381-residue chain is Creatine kinase M-type (381 aa).

Positions 11–98 (KLKFSAEEEF…FDPVIQDRHG (88 aa)) constitute a Phosphagen kinase N-terminal domain. Residues 99–118 (GYKPTDKHRTDLNHENLKGG) are disordered. Positions 125-367 (YVLSSRVRTG…KLMVEMEKKL (243 aa)) constitute a Phosphagen kinase C-terminal domain. ATP is bound by residues 128 to 132 (SSRVR), His-191, Arg-236, Arg-292, 320 to 325 (RGTGGV), and Asp-335.

This sequence belongs to the ATP:guanido phosphotransferase family. In terms of assembly, dimer of identical or non-identical chains, which can be either B (brain type) or M (muscle type). With MM being the major form in skeletal muscle and myocardium, MB existing in myocardium, and BB existing in many tissues, especially brain. Predominantly found in skeletal muscle, but not in the heart.

The protein localises to the cytoplasm. The enzyme catalyses creatine + ATP = N-phosphocreatine + ADP + H(+). Reversibly catalyzes the transfer of phosphate between ATP and various phosphogens (e.g. creatine phosphate). Creatine kinase isoenzymes play a central role in energy transduction in tissues with large, fluctuating energy demands, such as skeletal muscle, heart, brain and spermatozoa. The sequence is that of Creatine kinase M-type from Gallus gallus (Chicken).